Here is a 1068-residue protein sequence, read N- to C-terminus: Carbamoyl phosphate synthase large chain (1068 aa).

Positions 1–401 are carboxyphosphate synthetic domain; sequence MPLNKDIKKV…AFLKGIRSLE (401 aa). ATP is bound by residues R129, R169, G175, G176, K208, V210, E215, G241, I242, H243, Q284, and E298. The 195-residue stretch at 133–327 folds into the ATP-grasp 1 domain; that stretch reads RNVMSRINEP…IAKVAAKIAL (195 aa). Mg(2+) is bound by residues Q284, E298, and N300. Mn(2+)-binding residues include Q284, E298, and N300. Residues 402–549 are oligomerization domain; it reads IGKYSLEHKK…YSTYDVYDEV (148 aa). The tract at residues 550–932 is carbamoyl phosphate synthetic domain; that stretch reads EVSKNKKVIV…ALYKGFIGAN (383 aa). Residues 674–864 form the ATP-grasp 2 domain; that stretch reads DELLEKLQIS…IVDIATRVML (191 aa). Residues R710, K749, L751, E755, G780, V781, H782, S783, Q823, and E835 each contribute to the ATP site. Mg(2+) is bound by residues Q823, E835, and N837. Residues Q823, E835, and N837 each contribute to the Mn(2+) site. Residues 933 to 1068 enclose the MGS-like domain; sequence MSIKKEKGTI…ETLHIFDLSN (136 aa). Positions 933–1068 are allosteric domain; it reads MSIKKEKGTI…ETLHIFDLSN (136 aa).

Belongs to the CarB family. In terms of assembly, composed of two chains; the small (or glutamine) chain promotes the hydrolysis of glutamine to ammonia, which is used by the large (or ammonia) chain to synthesize carbamoyl phosphate. Tetramer of heterodimers (alpha,beta)4. It depends on Mg(2+) as a cofactor. The cofactor is Mn(2+).

It carries out the reaction hydrogencarbonate + L-glutamine + 2 ATP + H2O = carbamoyl phosphate + L-glutamate + 2 ADP + phosphate + 2 H(+). It catalyses the reaction hydrogencarbonate + NH4(+) + 2 ATP = carbamoyl phosphate + 2 ADP + phosphate + 2 H(+). It functions in the pathway amino-acid biosynthesis; L-arginine biosynthesis; carbamoyl phosphate from bicarbonate: step 1/1. The protein operates within pyrimidine metabolism; UMP biosynthesis via de novo pathway; (S)-dihydroorotate from bicarbonate: step 1/3. Its function is as follows. Large subunit of the glutamine-dependent carbamoyl phosphate synthetase (CPSase). CPSase catalyzes the formation of carbamoyl phosphate from the ammonia moiety of glutamine, carbonate, and phosphate donated by ATP, constituting the first step of 2 biosynthetic pathways, one leading to arginine and/or urea and the other to pyrimidine nucleotides. The large subunit (synthetase) binds the substrates ammonia (free or transferred from glutamine from the small subunit), hydrogencarbonate and ATP and carries out an ATP-coupled ligase reaction, activating hydrogencarbonate by forming carboxy phosphate which reacts with ammonia to form carbamoyl phosphate. This chain is Carbamoyl phosphate synthase large chain, found in Clostridium botulinum (strain Loch Maree / Type A3).